The primary structure comprises 76 residues: Small nuclear ribonucleoprotein G (76 aa).

Positions 4 to 76 (AHPPELKKFM…IIMLEALERV (73 aa)) constitute a Sm domain.

It belongs to the snRNP Sm proteins family. Core component of the spliceosomal U1, U2, U4 and U5 small nuclear ribonucleoproteins (snRNPs), the building blocks of the spliceosome. Most spliceosomal snRNPs contain a common set of Sm proteins, SNRPB, SNRPD1, SNRPD2, SNRPD3, SNRPE, SNRPF and SNRPG that assemble in a heptameric protein ring on the Sm site of the small nuclear RNA to form the core snRNP. Component of the U1 snRNP. The U1 snRNP is composed of the U1 snRNA and the 7 core Sm proteins SNRPB, SNRPD1, SNRPD2, SNRPD3, SNRPE, SNRPF and SNRPG, and at least three U1 snRNP-specific proteins SNRNP70/U1-70K, SNRPA/U1-A and SNRPC/U1-C. Component of the U4/U6-U5 tri-snRNP complex composed of the U4, U6 and U5 snRNAs and at least PRPF3, PRPF4, PRPF6, PRPF8, PRPF31, SNRNP200, TXNL4A, SNRNP40, SNRPB, SNRPD1, SNRPD2, SNRPD3, SNRPE, SNRPF, SNRPG, DDX23, CD2BP2, PPIH, SNU13, EFTUD2, SART1 and USP39, plus LSM2, LSM3, LSM4, LSM5, LSM6, LSM7 and LSM8. Component of the U7 snRNP complex, or U7 Sm protein core complex, that is composed of the U7 snRNA and at least LSM10, LSM11, SNRPB, SNRPD3, SNRPE, SNRPF and SNRPG; the complex does not contain SNRPD1 and SNRPD2. Component of the minor spliceosome, which splices U12-type introns. Part of the SMN-Sm complex that contains SMN1, GEMIN2/SIP1, DDX20/GEMIN3, GEMIN4, GEMIN5, GEMIN6, GEMIN7, GEMIN8, STRAP/UNRIP and the Sm proteins SNRPB, SNRPD1, SNRPD2, SNRPD3, SNRPE, SNRPF and SNRPG; catalyzes core snRNPs assembly. Forms a 6S pICln-Sm complex composed of CLNS1A/pICln, SNRPD1, SNRPD2, SNRPE, SNRPF and SNRPG; ring-like structure where CLNS1A/pICln mimics additional Sm proteins and which is unable to assemble into the core snRNP. Interacts with GEMIN2 (via N-terminus); the interaction is direct. Interacts with SNRPE; the interaction is direct.

It localises to the cytoplasm. The protein resides in the cytosol. Its subcellular location is the nucleus. Functionally, plays a role in pre-mRNA splicing as a core component of the spliceosomal U1, U2, U4 and U5 small nuclear ribonucleoproteins (snRNPs), the building blocks of the spliceosome. Component of both the pre-catalytic spliceosome B complex and activated spliceosome C complexes. As a component of the minor spliceosome, involved in the splicing of U12-type introns in pre-mRNAs. As part of the U7 snRNP it is involved in histone 3'-end processing. This chain is Small nuclear ribonucleoprotein G (SNRPG), found in Bos taurus (Bovine).